An 84-amino-acid chain; its full sequence is uncharacterized protein (84 aa).

This is an uncharacterized protein from Micrococcus luteus (Micrococcus lysodeikticus).